Consider the following 374-residue polypeptide: Alcohol dehydrogenase class-3 (374 aa).

A2 carries the N-acetylalanine modification. Residues C45, H67, C97, C100, C103, C111, and C174 each coordinate Zn(2+). K233 is subject to N6-succinyllysine. At S247 the chain carries Phosphoserine. Position 315 is an N6-succinyllysine (K315). S324 is subject to Phosphoserine.

This sequence belongs to the zinc-containing alcohol dehydrogenase family. Class-III subfamily. In terms of assembly, homodimer. It depends on Zn(2+) as a cofactor.

Its subcellular location is the cytoplasm. The catalysed reaction is a primary alcohol + NAD(+) = an aldehyde + NADH + H(+). It carries out the reaction a secondary alcohol + NAD(+) = a ketone + NADH + H(+). The enzyme catalyses S-(hydroxymethyl)glutathione + NADP(+) = S-formylglutathione + NADPH + H(+). It catalyses the reaction S-(hydroxymethyl)glutathione + NAD(+) = S-formylglutathione + NADH + H(+). The catalysed reaction is 20-oxo-(5Z,8Z,11Z,14Z)-eicosatetraenoate + NAD(+) + H2O = (5Z,8Z,11Z,14Z)-eicosatetraenedioate + NADH + 2 H(+). It carries out the reaction 20-hydroxy-(5Z,8Z,11Z,14Z)-eicosatetraenoate + NAD(+) = 20-oxo-(5Z,8Z,11Z,14Z)-eicosatetraenoate + NADH + H(+). The enzyme catalyses S-nitrosoglutathione + NADH + H(+) = S-(hydroxysulfenamide)glutathione + NAD(+). In terms of biological role, catalyzes the oxidation of long-chain primary alcohols and the oxidation of S-(hydroxymethyl) glutathione. Also oxidizes long chain omega-hydroxy fatty acids, such as 20-HETE, producing both the intermediate aldehyde, 20-oxoarachidonate and the end product, a dicarboxylic acid, (5Z,8Z,11Z,14Z)-eicosatetraenedioate. Class-III ADH is remarkably ineffective in oxidizing ethanol. Required for clearance of cellular formaldehyde, a cytotoxic and carcinogenic metabolite that induces DNA damage. Also acts as a S-nitroso-glutathione reductase by catalyzing the NADH-dependent reduction of S-nitrosoglutathione, thereby regulating protein S-nitrosylation. The protein is Alcohol dehydrogenase class-3 of Bos taurus (Bovine).